We begin with the raw amino-acid sequence, 629 residues long: Kelch-like protein 13 (629 aa).

Residues 66-135 enclose the BTB domain; it reads CDVTLVPGDG…IYTAKLSLNM (70 aa). A BACK domain is found at 170 to 271; it reads CVEVGRIANT…TPQDLINYVQ (102 aa). Kelch repeat units lie at residues 315–363, 364–415, 416–462, 464–509, 511–561, and 562–610; these read HLVT…VIGN, FLYV…ALKG, HLYA…VYGG, MYIS…TVGD, LYVI…VFEN, and KIYV…TLTV.

Component of the BCR(KLHL9-KLHL13) E3 ubiquitin ligase complex, at least composed of CUL3, KLHL9, KLHL13 and RBX1. Interacts with AURKB.

Its pathway is protein modification; protein ubiquitination. Functionally, substrate-specific adapter of a BCR (BTB-CUL3-RBX1) E3 ubiquitin-protein ligase complex required for mitotic progression and cytokinesis. The BCR(KLHL9-KLHL13) E3 ubiquitin ligase complex mediates the ubiquitination of AURKB and controls the dynamic behavior of AURKB on mitotic chromosomes and thereby coordinates faithful mitotic progression and completion of cytokinesis. The polypeptide is Kelch-like protein 13 (KLHL13) (Gallus gallus (Chicken)).